The chain runs to 215 residues: Cytochrome c biogenesis ATP-binding export protein CcmA (215 aa).

The ABC transporter domain maps to 12–215 (LAAHALTYSR…TRLLHLQKAP (204 aa)). 44-51 (GPNGIGKT) is an ATP binding site.

It belongs to the ABC transporter superfamily. CcmA exporter (TC 3.A.1.107) family. As to quaternary structure, the complex is composed of two ATP-binding proteins (CcmA) and two transmembrane proteins (CcmB).

It localises to the cell inner membrane. It carries out the reaction heme b(in) + ATP + H2O = heme b(out) + ADP + phosphate + H(+). Part of the ABC transporter complex CcmAB involved in the biogenesis of c-type cytochromes; once thought to export heme, this seems not to be the case, but its exact role is uncertain. Responsible for energy coupling to the transport system. The sequence is that of Cytochrome c biogenesis ATP-binding export protein CcmA from Xylella fastidiosa (strain Temecula1 / ATCC 700964).